A 256-amino-acid polypeptide reads, in one-letter code: Small ribosomal subunit protein eS1B (256 aa).

At A2 the chain carries N-acetylalanine; partial.

This sequence belongs to the eukaryotic ribosomal protein eS1 family. Component of the small ribosomal subunit. Mature ribosomes consist of a small (40S) and a large (60S) subunit. The 40S subunit contains about 33 different proteins and 1 molecule of RNA (18S). The 60S subunit contains about 49 different proteins and 3 molecules of RNA (25S, 5.8S and 5S).

Its subcellular location is the cytoplasm. This is Small ribosomal subunit protein eS1B from Clavispora lusitaniae (strain ATCC 42720) (Yeast).